A 164-amino-acid polypeptide reads, in one-letter code: UPF0303 protein Smed_2872 (164 aa).

This sequence belongs to the UPF0303 family.

This chain is UPF0303 protein Smed_2872, found in Sinorhizobium medicae (strain WSM419) (Ensifer medicae).